Here is an 88-residue protein sequence, read N- to C-terminus: uncharacterized protein (88 aa).

It belongs to the phD/YefM antitoxin family.

This is an uncharacterized protein from Sinorhizobium fredii (strain NBRC 101917 / NGR234).